A 132-amino-acid polypeptide reads, in one-letter code: Small ribosomal subunit protein uS8 (132 aa).

The protein belongs to the universal ribosomal protein uS8 family. In terms of assembly, part of the 30S ribosomal subunit. Contacts proteins S5 and S12.

Its function is as follows. One of the primary rRNA binding proteins, it binds directly to 16S rRNA central domain where it helps coordinate assembly of the platform of the 30S subunit. In Mycoplasmopsis synoviae (strain 53) (Mycoplasma synoviae), this protein is Small ribosomal subunit protein uS8.